Consider the following 418-residue polypeptide: Zinc finger protein 566 (418 aa).

The KRAB domain occupies 6 to 77 (VMFSDVSVDF…DRELTRGQWP (72 aa)). The C2H2-type 1; degenerate zinc-finger motif lies at 169-193 (KFCASKEYRKTFRHGSQFATHEIIH). C2H2-type zinc fingers lie at residues 199–221 (YECKECGKSFRHPSRLTHHQKIH), 227–249 (FECKECGKTFICGSDLTRHHRIH), 255–277 (YECKECGKAFSSGSNFTRHQRIH), 283–305 (YECKECGKAFSSGSNFTQHQRIH), 311–333 (YECKECGNAFSQSSQLIKHQRIH), 339–361 (YECKECEKAFRSGSDLTRHQRIH), and 367–389 (YECKICGKAYSQSSQLISHHRIH). Glycyl lysine isopeptide (Lys-Gly) (interchain with G-Cter in SUMO2) cross-links involve residues K314 and K328.

Belongs to the krueppel C2H2-type zinc-finger protein family.

The protein resides in the nucleus. Its function is as follows. May be involved in transcriptional regulation. This is Zinc finger protein 566 (ZNF566) from Pan troglodytes (Chimpanzee).